Consider the following 344-residue polypeptide: GTPase Obg (344 aa).

Residues 1 to 159 form the Obg domain; it reads MKFLDQAKVY…RWIWLRLKLI (159 aa). In terms of domain architecture, OBG-type G spans 160–327; the sequence is ADAGLVGLPN…ALRLLLSVVE (168 aa). GTP contacts are provided by residues 166-173, 191-195, 212-215, 279-282, and 308-310; these read GLPNAGKS, FTTLH, DIPG, SKVD, and SAQ. The Mg(2+) site is built by serine 173 and threonine 193.

Belongs to the TRAFAC class OBG-HflX-like GTPase superfamily. OBG GTPase family. Monomer. Mg(2+) serves as cofactor.

Its subcellular location is the cytoplasm. An essential GTPase which binds GTP, GDP and possibly (p)ppGpp with moderate affinity, with high nucleotide exchange rates and a fairly low GTP hydrolysis rate. Plays a role in control of the cell cycle, stress response, ribosome biogenesis and in those bacteria that undergo differentiation, in morphogenesis control. The sequence is that of GTPase Obg from Xanthobacter autotrophicus (strain ATCC BAA-1158 / Py2).